Consider the following 362-residue polypeptide: MEQQPKMVTGWAARDANGLLSPFSYPLRAKGDEDVVVKILFCGICHSDLSTIKNEWGNAKYPVVPGHEIVGVVAEVGSSVARFAAGDTVGVGYIASTCRACANCRDGFENYCAGLVPSFNAALPDGATVHGGFSELAVVNQRYVVRIPGGGGGASPAPLDRLAPLLCAGVTVYCPMRRLGLDRPGVHLGVAGLGGLGHLAVKFGKAFGVKVTVISTSPWKEAEAVERLGADAFLLSTNAEQMKAAAGTMDGIIDTVSAVHDLTPLITLLRTHGQLVPVGSPGKPVQLALYPLQSDGKSVAGSMIGGMRDTQEMVDFAVEHGVAAEVEVIGMEDVNGAMERLQKGDVRYRFVIDVANTMARAR.

Position 45 (C45) interacts with Zn(2+). An NADP(+)-binding site is contributed by S47. 7 residues coordinate Zn(2+): H67, E68, C98, C101, C104, C112, and C167. NADP(+) is bound by residues T171, 192–197, 215–220, T255, G279, and 302–304; these read GLGGLG, STSPWK, and SMI.

Belongs to the zinc-containing alcohol dehydrogenase family. Homodimer. It depends on Zn(2+) as a cofactor.

The catalysed reaction is (E)-cinnamyl alcohol + NADP(+) = (E)-cinnamaldehyde + NADPH + H(+). It catalyses the reaction (E)-coniferol + NADP(+) = (E)-coniferaldehyde + NADPH + H(+). It carries out the reaction (E)-sinapyl alcohol + NADP(+) = (E)-sinapaldehyde + NADPH + H(+). The enzyme catalyses (E)-4-coumaroyl alcohol + NADP(+) = (E)-4-coumaraldehyde + NADPH + H(+). The catalysed reaction is (E)-caffeyl alcohol + NADP(+) = (E)-caffeyl aldehyde + NADPH + H(+). It functions in the pathway aromatic compound metabolism; phenylpropanoid biosynthesis. Involved in lignin biosynthesis. Catalyzes the final step specific for the production of lignin monomers. Catalyzes the NADPH-dependent reduction of coniferaldehyde, 5-hydroxyconiferaldehyde, sinapaldehyde, 4-coumaraldehyde and caffeyl aldehyde to their respective alcohols. The sequence is that of Probable cinnamyl alcohol dehydrogenase 9 from Oryza sativa subsp. japonica (Rice).